Reading from the N-terminus, the 557-residue chain is Probable protein kinase UbiB (557 aa).

Residues Ser121 to Ala509 form the Protein kinase domain. ATP-binding positions include Leu127 to Val135 and Lys154. Asp289 functions as the Proton acceptor in the catalytic mechanism. The next 2 helical transmembrane spans lie at Val506–His526 and Val535–Leu555.

This sequence belongs to the ABC1 family. UbiB subfamily.

The protein resides in the cell inner membrane. It functions in the pathway cofactor biosynthesis; ubiquinone biosynthesis [regulation]. Is probably a protein kinase regulator of UbiI activity which is involved in aerobic coenzyme Q (ubiquinone) biosynthesis. The polypeptide is Probable protein kinase UbiB (Xanthomonas axonopodis pv. citri (strain 306)).